The chain runs to 177 residues: ATP synthase subunit delta (177 aa).

This sequence belongs to the ATPase delta chain family. F-type ATPases have 2 components, F(1) - the catalytic core - and F(0) - the membrane proton channel. F(1) has five subunits: alpha(3), beta(3), gamma(1), delta(1), epsilon(1). F(0) has three main subunits: a(1), b(2) and c(10-14). The alpha and beta chains form an alternating ring which encloses part of the gamma chain. F(1) is attached to F(0) by a central stalk formed by the gamma and epsilon chains, while a peripheral stalk is formed by the delta and b chains.

It localises to the cell inner membrane. F(1)F(0) ATP synthase produces ATP from ADP in the presence of a proton or sodium gradient. F-type ATPases consist of two structural domains, F(1) containing the extramembraneous catalytic core and F(0) containing the membrane proton channel, linked together by a central stalk and a peripheral stalk. During catalysis, ATP synthesis in the catalytic domain of F(1) is coupled via a rotary mechanism of the central stalk subunits to proton translocation. Its function is as follows. This protein is part of the stalk that links CF(0) to CF(1). It either transmits conformational changes from CF(0) to CF(1) or is implicated in proton conduction. This Aeromonas salmonicida (strain A449) protein is ATP synthase subunit delta.